A 205-amino-acid polypeptide reads, in one-letter code: Methylthioribulose-1-phosphate dehydratase (205 aa).

Residues His96 and His98 each contribute to the Zn(2+) site.

It belongs to the aldolase class II family. MtnB subfamily. The cofactor is Zn(2+).

The enzyme catalyses 5-(methylsulfanyl)-D-ribulose 1-phosphate = 5-methylsulfanyl-2,3-dioxopentyl phosphate + H2O. The protein operates within amino-acid biosynthesis; L-methionine biosynthesis via salvage pathway; L-methionine from S-methyl-5-thio-alpha-D-ribose 1-phosphate: step 2/6. Its function is as follows. Catalyzes the dehydration of methylthioribulose-1-phosphate (MTRu-1-P) into 2,3-diketo-5-methylthiopentyl-1-phosphate (DK-MTP-1-P). This Pseudomonas aeruginosa (strain LESB58) protein is Methylthioribulose-1-phosphate dehydratase.